The following is a 243-amino-acid chain: Retrotransposon Gag-like protein 6 (243 aa).

The span at Met-1–Pro-12 shows a compositional bias: polar residues. The tract at residues Met-1 to Met-22 is disordered. A coiled-coil region spans residues Leu-29–Thr-69. Disordered stretches follow at residues Ser-84–Phe-105 and Thr-218–Leu-243. Positions Ala-85–Met-94 are enriched in polar residues.

Belongs to the LDOC1 family. Widely expressed.

This is Retrotransposon Gag-like protein 6 from Mus musculus (Mouse).